A 504-amino-acid chain; its full sequence is Anaerobic nitric oxide reductase transcription regulator NorR (504 aa).

At D57 the chain carries 4-aspartylphosphate. Residues 187 to 416 enclose the Sigma-54 factor interaction domain; sequence MIGLSPGMTQ…LEHAIHRAVV (230 aa). Residues 215 to 222 and 278 to 287 each bind ATP; these read GETGTGKE and ADNGTLFLDE. A DNA-binding region (H-T-H motif) is located at residues 479–498; that stretch reads WAACARMLETDVANLHRLAK.

It functions in the pathway nitrogen metabolism; nitric oxide reduction. Functionally, required for the expression of anaerobic nitric oxide (NO) reductase, acts as a transcriptional activator for at least the norVW operon. Activation also requires sigma-54. In Shigella flexneri serotype 5b (strain 8401), this protein is Anaerobic nitric oxide reductase transcription regulator NorR.